Reading from the N-terminus, the 389-residue chain is Agamous-like MADS-box protein AGL65 (389 aa).

The 61-residue stretch at 1 to 61 (MGRVKLKIKR…GRATAFHGEH (61 aa)) folds into the MADS-box domain. 2 coiled-coil regions span residues 77–131 (QERT…LMEC) and 293–325 (GMEE…QQQD). The segment at 310-343 (NLQQQQQQQQQQQQQDPSMYDPMANNNGGCFQIP) is disordered. Residues 312-324 (QQQQQQQQQQQQQ) show a composition bias toward low complexity.

In terms of assembly, forms a heterodimer with AGL104. In terms of tissue distribution, expressed in pollen.

The protein localises to the nucleus. Functionally, probable transcription factor that forms a heterodimer with the MADS-box protein AGL104 and is involved in the regulation of pollen maturation at the late stages of pollen development and pollen tube growth. The polypeptide is Agamous-like MADS-box protein AGL65 (Arabidopsis thaliana (Mouse-ear cress)).